A 129-amino-acid polypeptide reads, in one-letter code: Large ribosomal subunit protein bL12 (129 aa).

Belongs to the bacterial ribosomal protein bL12 family. Homodimer. Part of the ribosomal stalk of the 50S ribosomal subunit. Forms a multimeric L10(L12)X complex, where L10 forms an elongated spine to which 2 to 4 L12 dimers bind in a sequential fashion. Binds GTP-bound translation factors.

Functionally, forms part of the ribosomal stalk which helps the ribosome interact with GTP-bound translation factors. Is thus essential for accurate translation. The sequence is that of Large ribosomal subunit protein bL12 from Mycobacteroides abscessus (strain ATCC 19977 / DSM 44196 / CCUG 20993 / CIP 104536 / JCM 13569 / NCTC 13031 / TMC 1543 / L948) (Mycobacterium abscessus).